Reading from the N-terminus, the 517-residue chain is Crotonobetaine/carnitine--CoA ligase (517 aa).

The protein belongs to the ATP-dependent AMP-binding enzyme family.

It catalyses the reaction 4-(trimethylamino)butanoate + ATP + CoA = 4-(trimethylamino)butanoyl-CoA + AMP + diphosphate. The enzyme catalyses crotonobetaine + ATP + CoA = crotonobetainyl-CoA + AMP + diphosphate. The catalysed reaction is (R)-carnitine + ATP + CoA = (R)-carnitinyl-CoA + AMP + diphosphate. It participates in amine and polyamine metabolism; carnitine metabolism. Functionally, catalyzes the transfer of CoA to carnitine, generating the initial carnitinyl-CoA needed for the CaiB reaction cycle. Also has activity toward crotonobetaine and gamma-butyrobetaine. In Salmonella typhi, this protein is Crotonobetaine/carnitine--CoA ligase.